The following is a 91-amino-acid chain: Small ribosomal subunit protein uS19 (91 aa).

Belongs to the universal ribosomal protein uS19 family.

Protein S19 forms a complex with S13 that binds strongly to the 16S ribosomal RNA. In Janthinobacterium sp. (strain Marseille) (Minibacterium massiliensis), this protein is Small ribosomal subunit protein uS19.